We begin with the raw amino-acid sequence, 414 residues long: Serine hydroxymethyltransferase (414 aa).

(6S)-5,6,7,8-tetrahydrofolate contacts are provided by residues Leu121 and 125–127 (GHL). Lys229 is modified (N6-(pyridoxal phosphate)lysine).

It belongs to the SHMT family. As to quaternary structure, homodimer. Pyridoxal 5'-phosphate serves as cofactor.

It localises to the cytoplasm. The catalysed reaction is (6R)-5,10-methylene-5,6,7,8-tetrahydrofolate + glycine + H2O = (6S)-5,6,7,8-tetrahydrofolate + L-serine. The protein operates within one-carbon metabolism; tetrahydrofolate interconversion. It participates in amino-acid biosynthesis; glycine biosynthesis; glycine from L-serine: step 1/1. In terms of biological role, catalyzes the reversible interconversion of serine and glycine with tetrahydrofolate (THF) serving as the one-carbon carrier. This reaction serves as the major source of one-carbon groups required for the biosynthesis of purines, thymidylate, methionine, and other important biomolecules. Also exhibits THF-independent aldolase activity toward beta-hydroxyamino acids, producing glycine and aldehydes, via a retro-aldol mechanism. The chain is Serine hydroxymethyltransferase from Albidiferax ferrireducens (strain ATCC BAA-621 / DSM 15236 / T118) (Rhodoferax ferrireducens).